The chain runs to 2289 residues: MKGHQFKSWIFELREIVREIKNSHYFLDSWTQFNSVGSFIHIFFHQERFRKLLDPRIFSILLLRNSQGSTSNRYFSIKGVVLFVVAALLYRINNRNMVESKNLYLKGLLPIPMNSIGPRNDTSEESFGSCNINRLVVSLLFLTKGKKISESCFRDPKESTWVLPITQKCIMPESNWSSRWWRNWIGKKRDFCCKISNETVAGIDISFKEKDIKYLEFLFVYYMDDPIRKGHDWELFDRLSPSKRRNIINLNSGQLFEILVKDWICYLMFAFREKIPIEVEGFFKQQGAGSTIQSNDIEHVSHLFSRNKWAISLQNCAQFHMWQFHQDLFVSWGKNPHESDFFRKISRENWIWLDNVWLVNKDRFFSKVRNVSSNIQYDSTRSSFVQVTDSSQLNGSSDQFIDPFDSISNEDSEYHTLINQREIQQLKERSILLDPSFIQTEGREIESDRFPKYLSDYSSMPRLFTEREKRMIIHSLPEESEEFLGNPTRAIRSFFSDRWSELHLGSNPTERSTRDQKLLKKEQDVSFVPSRRSENKEIVNIFKIITYLQNTVSIHPISSDLGCDMVPKDELDMDSSNKISFLNKNPFFDLFHLFHERKRGGYTLRHESEERFQEMADLFTLSITEPDLVYHKGFAFSIDSYGLDQRQFLKEVFNFRDESKKKSLLVLPPIFYEENESFYRRIRKNWVRISCGNYLEDPKRVVFASNNIVEAVNQYRLIRNMIQIQFQYSPYGYIRNVLNRFFLMKRPDRNFEYGIQRDLIGNDTLNHRTIMKDTINQHLSNLKKSQKKWFDPLIFLSQTERSINRDPNAYRYKWSNGSKNFQEHLEHFVSERKSRFQVVFDQLCINQYSIDWSEVIDKKDLSKSLRFFLSKLLRFFLSKLLLFLSKLLLFLSNSLPFFFVSFENIPIHRSEIHIYELKGPNDQLCNQLLESIGLQIVHLKKLKPFLLDDHNTSQKSKFLINGGTISPFLFNKIPKWMIDSFHTRKNRRKSFDNTDSYFSIVSHDQDNWLNPAKPFQRSSLISSFSKANRLRFLNNPHHFCFYCNKRFPFYVEKARLNNSDFTYGQFLTILFIHNKIFSSCGGKKKHAFLERDTISPSSIESQVSNIFISNDFPQSGDERYNLYKSFHFPIRSDPLVRRAIYSIADISGTPLIEGQRVNFERTYCQTLSDMNLSDSEEKSLHQYLNFNSNMGLIHTPCSEKYLQRKKRSLCLKKCVDKGQMDRPFQRDSAFSTLSKWNLFQTYMPWFFTSTGYKYLNLIFLDTFSDLLRILSSSQKFVSIFHDIMHGVDISWRILQKKLCLPQRNLISEISSKSLHNLLLSEEMIHRNNESSLISTHLRSPNVREVLYSILFLLLVAGYIVRTHLLFVSRAYSELQTEFEKIKSLMIPSYMIELRKLLDRYPTSELNSFWLKNLFLVALEQLGDCLEEIRGSGGNMLWGGDPAYGVKSIRSKKKDLKINFIDIIDLISIIPNPINRITFSRNTRHLSHTSKEIYSLIRKRKNVSGDWIDDKIESWVANSDSIDDKEREFLVQFSTLRAEKRIDQILLSLTHSDHLSKNDSGYQMIEQPGTIYLRYLVDIHKKYLMNYEFNTSCLAERRIFLAHYQTITYSQTSCGANSFHFPSHGKPFSLRLALSPSRSILVIGSIGTGRSYLVKYLATNSYVPFITVFLNKFLDNKPKGFFIDDIDIDDSDDIDASNDIDRELDTELELLTMMNALTMDMMSEIDRFYITLQFELAKAMSPCIIWIPNIHDLDVNESSYLALGLLVNSLSRDCERCSTRNILVIASTHIPQKVDPALIAPNKLNTCIKIRRLLIPQQRKHFFTLSYTRGFHLENKMFHTNGFESITMGSSARDLVALTNEALSISITQKKSIIDTNTIRSALHSQTWDLRSQVRSVQDHGILFYQIGRAVAQNVLISNCPIDPISIYMKKKSCNEGDSYLYKWYFELGTSMKKFTILLYLLSCSAGSVAQDLWSLPVPDEKNRITSYGFIENDSDLVHGLLEVQGALVGSSRTEKDCSQFDNDRVTLLFRSEPRDPLYMMQDGSCSIVDQRFLYEKYESEFEEGEGEGVLDPQQIEEDLFNHIVWAPRIWRPRGFLFDCIERPNELGFPYLAGSFRGKRIIYDEKYELQENDSEFLQSGTMQYQRRDRFSKEQGFFRISQFIWDPADPLFFLFKDQPFVSVFSHREFFADEEMSKGLLTSQTDPPTSIYKRWFIKNTQEKHFELLIQRQRWLRTNSSLSNGFFRSNTRSESYQYLSNLFLSNGTLLDRMTKTLLKKRWLFSDEMKIGFM.

1643 to 1650 (GSIGTGRS) serves as a coordination point for ATP.

It belongs to the Ycf2 family.

The protein localises to the plastid. The protein resides in the chloroplast stroma. In terms of biological role, probable ATPase of unknown function. Its presence in a non-photosynthetic plant (Epifagus virginiana) and experiments in tobacco indicate that it has an essential function which is probably not related to photosynthesis. In Capsella bursa-pastoris (Shepherd's purse), this protein is Protein Ycf2.